The sequence spans 397 residues: NADH-quinone oxidoreductase subunit D (397 aa).

The protein belongs to the complex I 49 kDa subunit family. In terms of assembly, NDH-1 is composed of 14 different subunits. Subunits NuoB, C, D, E, F, and G constitute the peripheral sector of the complex.

The protein localises to the cell inner membrane. The catalysed reaction is a quinone + NADH + 5 H(+)(in) = a quinol + NAD(+) + 4 H(+)(out). Functionally, NDH-1 shuttles electrons from NADH, via FMN and iron-sulfur (Fe-S) centers, to quinones in the respiratory chain. The immediate electron acceptor for the enzyme in this species is believed to be ubiquinone. Couples the redox reaction to proton translocation (for every two electrons transferred, four hydrogen ions are translocated across the cytoplasmic membrane), and thus conserves the redox energy in a proton gradient. This chain is NADH-quinone oxidoreductase subunit D, found in Magnetococcus marinus (strain ATCC BAA-1437 / JCM 17883 / MC-1).